Consider the following 278-residue polypeptide: Elongation factor Ts 2, mitochondrial (278 aa).

Belongs to the EF-Ts family.

The protein localises to the mitochondrion. Functionally, associates with the EF-Tu.GDP complex and induces the exchange of GDP to GTP. It remains bound to the aminoacyl-tRNA.EF-Tu.GTP complex up to the GTP hydrolysis stage on the ribosome. The protein is Elongation factor Ts 2, mitochondrial of Trypanosoma cruzi (strain CL Brener).